Consider the following 258-residue polypeptide: Snake venom serine protease catroxase-2 (258 aa).

A signal peptide spans Met1–Ala18. Residues Gln19 to Leu24 constitute a propeptide that is removed on maturation. Residues Val25–Ala249 enclose the Peptidase S1 domain. Intrachain disulfides connect Cys31–Cys163, Cys50–Cys66, Cys98–Cys256, Cys142–Cys210, Cys174–Cys189, and Cys200–Cys225. N-linked (GlcNAc...) asparagine glycosylation occurs at Asn44. Catalysis depends on charge relay system residues His65 and Asp110. Ser204 functions as the Charge relay system in the catalytic mechanism.

Belongs to the peptidase S1 family. Snake venom subfamily. Monomer. As to expression, expressed by the venom gland.

It is found in the secreted. Its function is as follows. Snake venom serine protease that may act in the hemostasis system of the prey. This is Snake venom serine protease catroxase-2 from Crotalus atrox (Western diamondback rattlesnake).